The primary structure comprises 503 residues: MRWFINYKPCLLIILIFNSVILLFILIRKSSQPFSNILTDPSGTSREKLPVSHAFINSVYYYPTSKSLGENALAFTMAIDQHSYSMKNHTFTVLGYNSTDSVESIATSQTEGISRCRYVTMMARTNTVENLEKLKIESQGVSVEVPFRIARYSAPKPVIICISPQFAAEQWQMFVMHVHAANRFGGHLHIYLTSIIESYFQLMQEYERQGYITLDYWLRMKFSNTKTPYYEPNENVEWRHQAGAQTDCLLQYKEAAEYIAFFDMDDILFPKNYPTYLEEFNSVLAANPGKNYLFYGRREHEFVKASTLTEFSFTELVQSLRSSQTVKRGKVVVRPEAYNSTWIHNSKHVSFETSVQVKSPTLVHVQLPVDKNGKRNDSRDLWKIKFGPLNETIREDDIRAIEDDINRIKNLAVISSIGPFLPSSDFYLPIVFKCYFDSFYKDTFVTKIGVRRCPNADICDLPQREDYKCIHSDAQYYSGPDMQPVTYHFTTDSFWSKDIGCYQ.

The chain crosses the membrane as a helical span at residues 7–27 (YKPCLLIILIFNSVILLFILI). Residues 156 to 441 (KPVIICISPQ…FKCYFDSFYK (286 aa)) form the GT92 domain.

The protein belongs to the glycosyltransferase 92 family.

The protein localises to the membrane. In Caenorhabditis elegans, this protein is Glycosyltransferase family 92 protein ZK381.2.